Reading from the N-terminus, the 554-residue chain is DM7 family protein GG17593 (554 aa).

This sequence belongs to the DM7 family.

The sequence is that of DM7 family protein GG17593 from Drosophila erecta (Fruit fly).